Reading from the N-terminus, the 940-residue chain is Protein translocase subunit SecA (940 aa).

ATP contacts are provided by residues Gln-87, 105 to 109 (GEGKT), and Asp-494. The interval 879–940 (AQQQKKAVEG…KCHGASEASV (62 aa)) is disordered. Positions 884–898 (KAVEGRATADGKLDE) are enriched in basic and acidic residues. Residues 900–915 (SVAAAARPAAASRPAV) show a composition bias toward low complexity. Positions 921, 923, 932, and 933 each coordinate Zn(2+).

It belongs to the SecA family. In terms of assembly, monomer and homodimer. Part of the essential Sec protein translocation apparatus which comprises SecA, SecYEG and auxiliary proteins SecDF-YajC and YidC. The cofactor is Zn(2+).

The protein resides in the cell inner membrane. The protein localises to the cytoplasm. It catalyses the reaction ATP + H2O + cellular proteinSide 1 = ADP + phosphate + cellular proteinSide 2.. Part of the Sec protein translocase complex. Interacts with the SecYEG preprotein conducting channel. Has a central role in coupling the hydrolysis of ATP to the transfer of proteins into and across the cell membrane, serving as an ATP-driven molecular motor driving the stepwise translocation of polypeptide chains across the membrane. This is Protein translocase subunit SecA from Myxococcus xanthus (strain DK1622).